Consider the following 203-residue polypeptide: Ribonuclease HII (203 aa).

In terms of domain architecture, RNase H type-2 spans 16-203; that stretch reads ENIACCDEVG…HRKSFLNKIL (188 aa). The a divalent metal cation site is built by aspartate 22, glutamate 23, and aspartate 120.

This sequence belongs to the RNase HII family. Mn(2+) is required as a cofactor. Mg(2+) serves as cofactor.

Its subcellular location is the cytoplasm. It catalyses the reaction Endonucleolytic cleavage to 5'-phosphomonoester.. Functionally, endonuclease that specifically degrades the RNA of RNA-DNA hybrids. This Alkaliphilus oremlandii (strain OhILAs) (Clostridium oremlandii (strain OhILAs)) protein is Ribonuclease HII.